The following is a 379-amino-acid chain: Protein psi1 (379 aa).

The J domain occupies 1–70 (MVADTKLYDC…RKLYDQYGIT (70 aa)). 2 disordered regions span residues 69-95 (ITEG…FPGA) and 176-205 (FGGG…AQNE). Residues 81–95 (AEGGPGAGFGGFPGA) show a composition bias toward gly residues.

Required for nuclear migration during mitosis. It is required for the normal initiation of translation. This is Protein psi1 (psi1) from Schizosaccharomyces pombe (strain 972 / ATCC 24843) (Fission yeast).